Reading from the N-terminus, the 207-residue chain is Large ribosomal subunit protein uL3 (207 aa).

The interval 119-143 (GFQGSIKRNGQHRGPMAHGSRYHRR) is disordered.

Belongs to the universal ribosomal protein uL3 family. In terms of assembly, part of the 50S ribosomal subunit. Forms a cluster with proteins L14 and L19.

Functionally, one of the primary rRNA binding proteins, it binds directly near the 3'-end of the 23S rRNA, where it nucleates assembly of the 50S subunit. This chain is Large ribosomal subunit protein uL3, found in Ligilactobacillus salivarius (strain UCC118) (Lactobacillus salivarius).